Here is a 147-residue protein sequence, read N- to C-terminus: MPSYELALVLRQLPRPELISVIRRTAESILDKGGIIRKLENLGSRALPHKVSEHGVVHREGTHFTIAFDTAPTKIADLKEEFGRDIDIIRRYIFKVEEPEQKPCTLHEEMLPPAYRKDVQEIIAAAQKKQKKKFNYNSGLDYYPFQK.

Belongs to the bacterial ribosomal protein bS6 family. Component of the mitochondrial ribosome small subunit (28S) which comprises a 12S rRNA and about 30 distinct proteins.

It is found in the mitochondrion. In Drosophila melanogaster (Fruit fly), this protein is Small ribosomal subunit protein bS6m (mRpS6).